A 197-amino-acid chain; its full sequence is Glycerol-3-phosphate acyltransferase (197 aa).

4 helical membrane passes run 5 to 25 (LILITAYLLGSIPFALLVGKI), 70 to 90 (LPVLFSVHIHPLLAGVCAVIG), 111 to 131 (VMLFYSPFLFVSLLTVFFIVL), and 153 to 173 (IFFTDDIPLMIAVSLLTAFIF).

The protein belongs to the PlsY family. As to quaternary structure, probably interacts with PlsX.

The protein resides in the cell membrane. It carries out the reaction an acyl phosphate + sn-glycerol 3-phosphate = a 1-acyl-sn-glycero-3-phosphate + phosphate. Its pathway is lipid metabolism; phospholipid metabolism. In terms of biological role, catalyzes the transfer of an acyl group from acyl-phosphate (acyl-PO(4)) to glycerol-3-phosphate (G3P) to form lysophosphatidic acid (LPA). This enzyme utilizes acyl-phosphate as fatty acyl donor, but not acyl-CoA or acyl-ACP. In Geobacillus sp. (strain WCH70), this protein is Glycerol-3-phosphate acyltransferase.